The sequence spans 214 residues: 3,4-dihydroxy-2-butanone 4-phosphate synthase (214 aa).

D-ribulose 5-phosphate is bound by residues 37-38 (RE), Asp-42, 150-154 (RRGHT), and Glu-174. Glu-38 lines the Mg(2+) pocket. Mg(2+) is bound at residue His-153.

The protein belongs to the DHBP synthase family. As to quaternary structure, homodimer. Requires Mg(2+) as cofactor. It depends on Mn(2+) as a cofactor.

It catalyses the reaction D-ribulose 5-phosphate = (2S)-2-hydroxy-3-oxobutyl phosphate + formate + H(+). It participates in cofactor biosynthesis; riboflavin biosynthesis; 2-hydroxy-3-oxobutyl phosphate from D-ribulose 5-phosphate: step 1/1. Its function is as follows. Catalyzes the conversion of D-ribulose 5-phosphate to formate and 3,4-dihydroxy-2-butanone 4-phosphate. The protein is 3,4-dihydroxy-2-butanone 4-phosphate synthase of Desulfotalea psychrophila (strain LSv54 / DSM 12343).